We begin with the raw amino-acid sequence, 1025 residues long: Multidrug resistance protein MdtC (1025 aa).

A run of 12 helical transmembrane segments spans residues 15–35, 333–353, 360–380, 387–407, 431–451, 469–489, 528–548, 851–871, 875–895, 897–917, 953–973, and 984–1004; these read ILISLAITLCGILGFRLLPVA, EVEQTLVISVALVILVVFLFL, LIPAVAVPVSLIGTFAAMYLC, LSLMALTIATGFVVDDAIVVL, VGFTVLSMSLSLVAVFLPLLL, VAIGISLAVSLTLTPMMCGWL, LTGLVVLGTIALSVWLYISIP, AQVILILAAIATVYIVLGMLY, VHPLTILSTLPSAGVGALLAL, IFDAPFSLIALIGIMLLIGIV, PIMMTTLAALFGALPLVLSGG, and ITIVGGLVMSQLLTLYTTPVV.

This sequence belongs to the resistance-nodulation-cell division (RND) (TC 2.A.6) family. MdtC subfamily. As to quaternary structure, part of a tripartite efflux system composed of MdtA, MdtB and MdtC. MdtC forms a heteromultimer with MdtB.

The protein resides in the cell inner membrane. This chain is Multidrug resistance protein MdtC, found in Klebsiella pneumoniae (strain 342).